We begin with the raw amino-acid sequence, 98 residues long: Large ribosomal subunit protein uL23 (98 aa).

It belongs to the universal ribosomal protein uL23 family. Part of the 50S ribosomal subunit. Contacts protein L29, and trigger factor when it is bound to the ribosome.

Its function is as follows. One of the early assembly proteins it binds 23S rRNA. One of the proteins that surrounds the polypeptide exit tunnel on the outside of the ribosome. Forms the main docking site for trigger factor binding to the ribosome. The polypeptide is Large ribosomal subunit protein uL23 (Rickettsia prowazekii (strain Madrid E)).